The following is a 191-amino-acid chain: Peptidyl-tRNA hydrolase (191 aa).

Tyr14 contacts tRNA. His19 functions as the Proton acceptor in the catalytic mechanism. Tyr64, Asn66, and Asn112 together coordinate tRNA.

The protein belongs to the PTH family. As to quaternary structure, monomer.

It is found in the cytoplasm. It catalyses the reaction an N-acyl-L-alpha-aminoacyl-tRNA + H2O = an N-acyl-L-amino acid + a tRNA + H(+). Its function is as follows. Hydrolyzes ribosome-free peptidyl-tRNAs (with 1 or more amino acids incorporated), which drop off the ribosome during protein synthesis, or as a result of ribosome stalling. In terms of biological role, catalyzes the release of premature peptidyl moieties from peptidyl-tRNA molecules trapped in stalled 50S ribosomal subunits, and thus maintains levels of free tRNAs and 50S ribosomes. The sequence is that of Peptidyl-tRNA hydrolase from Clostridium botulinum (strain Alaska E43 / Type E3).